We begin with the raw amino-acid sequence, 381 residues long: Putative glycosyltransferase EpsD (381 aa).

This sequence belongs to the glycosyltransferase group 1 family. Glycosyltransferase 4 subfamily.

Functionally, may be involved in the production of the exopolysaccharide (EPS) component of the extracellular matrix during biofilm formation. EPS is responsible for the adhesion of chains of cells into bundles. Required for biofilm maintenance. The polypeptide is Putative glycosyltransferase EpsD (epsD) (Bacillus subtilis (strain 168)).